A 389-amino-acid polypeptide reads, in one-letter code: Alanine racemase 1 (389 aa).

Residue Lys41 is the Proton acceptor; specific for D-alanine of the active site. The residue at position 41 (Lys41) is an N6-(pyridoxal phosphate)lysine. Arg137 provides a ligand contact to substrate. Tyr266 functions as the Proton acceptor; specific for L-alanine in the catalytic mechanism. Met313 is a substrate binding site.

This sequence belongs to the alanine racemase family. The cofactor is pyridoxal 5'-phosphate.

The catalysed reaction is L-alanine = D-alanine. It participates in amino-acid biosynthesis; D-alanine biosynthesis; D-alanine from L-alanine: step 1/1. Its function is as follows. Catalyzes the interconversion of L-alanine and D-alanine. May also act on other amino acids. The polypeptide is Alanine racemase 1 (alr1) (Bacillus subtilis (strain 168)).